We begin with the raw amino-acid sequence, 235 residues long: Ribonuclease PH (235 aa).

Phosphate is bound by residues arginine 86 and 124–126 (GTR).

This sequence belongs to the RNase PH family. As to quaternary structure, homohexameric ring arranged as a trimer of dimers.

It catalyses the reaction tRNA(n+1) + phosphate = tRNA(n) + a ribonucleoside 5'-diphosphate. Its function is as follows. Phosphorolytic 3'-5' exoribonuclease that plays an important role in tRNA 3'-end maturation. Removes nucleotide residues following the 3'-CCA terminus of tRNAs; can also add nucleotides to the ends of RNA molecules by using nucleoside diphosphates as substrates, but this may not be physiologically important. Probably plays a role in initiation of 16S rRNA degradation (leading to ribosome degradation) during starvation. In Legionella pneumophila (strain Corby), this protein is Ribonuclease PH.